A 162-amino-acid chain; its full sequence is Peptidyl-prolyl cis-trans isomerase-like 1 (162 aa).

Residues 1 to 155 (MATDVAFDTS…DGVKILRARI (155 aa)) enclose the PPIase cyclophilin-type domain.

It belongs to the cyclophilin-type PPIase family. PPIL1 subfamily.

It carries out the reaction [protein]-peptidylproline (omega=180) = [protein]-peptidylproline (omega=0). In terms of biological role, PPIases accelerate the folding of proteins. It catalyzes the cis-trans isomerization of proline imidic peptide bonds in oligopeptides. The protein is Peptidyl-prolyl cis-trans isomerase-like 1 (cypC) of Aspergillus niger.